The sequence spans 104 residues: Large ribosomal subunit protein bL21 (104 aa).

The protein belongs to the bacterial ribosomal protein bL21 family. In terms of assembly, part of the 50S ribosomal subunit. Contacts protein L20.

Functionally, this protein binds to 23S rRNA in the presence of protein L20. The polypeptide is Large ribosomal subunit protein bL21 (Helicobacter pylori (strain Shi470)).